A 166-amino-acid chain; its full sequence is 3-isopropylmalate dehydratase small subunit (166 aa).

Belongs to the LeuD family. LeuD type 2 subfamily. In terms of assembly, heterodimer of LeuC and LeuD.

The catalysed reaction is (2R,3S)-3-isopropylmalate = (2S)-2-isopropylmalate. It functions in the pathway amino-acid biosynthesis; L-leucine biosynthesis; L-leucine from 3-methyl-2-oxobutanoate: step 2/4. Functionally, catalyzes the isomerization between 2-isopropylmalate and 3-isopropylmalate, via the formation of 2-isopropylmaleate. This chain is 3-isopropylmalate dehydratase small subunit, found in Heliobacterium modesticaldum (strain ATCC 51547 / Ice1).